Consider the following 544-residue polypeptide: Phosphoenolpyruvate carboxykinase (ATP) (544 aa).

246–253 (GLSGTGKT) is a binding site for ATP.

The protein belongs to the phosphoenolpyruvate carboxykinase (ATP) family.

It carries out the reaction oxaloacetate + ATP = phosphoenolpyruvate + ADP + CO2. Its pathway is carbohydrate biosynthesis; gluconeogenesis. This is Phosphoenolpyruvate carboxykinase (ATP) (PCK1) from Candida glabrata (strain ATCC 2001 / BCRC 20586 / JCM 3761 / NBRC 0622 / NRRL Y-65 / CBS 138) (Yeast).